Here is a 764-residue protein sequence, read N- to C-terminus: Phenylalanine--tRNA ligase beta subunit (764 aa).

A tRNA-binding domain is found at 38–148; it reads CIAPKNVVVG…GELVLGKELN (111 aa). In terms of domain architecture, B5 spans 375–455; it reads LKDRTLTFQL…RFVGIDNLVS (81 aa). Mg(2+) contacts are provided by D433, D439, E442, and E443. In terms of domain architecture, FDX-ACB spans 673-763; the sequence is SIYPSSVRDL…LEKEFNARLK (91 aa).

Belongs to the phenylalanyl-tRNA synthetase beta subunit family. Type 1 subfamily. Tetramer of two alpha and two beta subunits. Mg(2+) serves as cofactor.

It localises to the cytoplasm. The enzyme catalyses tRNA(Phe) + L-phenylalanine + ATP = L-phenylalanyl-tRNA(Phe) + AMP + diphosphate + H(+). The chain is Phenylalanine--tRNA ligase beta subunit (pheT) from Helicobacter pylori (strain ATCC 700392 / 26695) (Campylobacter pylori).